The primary structure comprises 310 residues: 4-hydroxyproline epimerase (310 aa).

Cys-88 (proton acceptor) is an active-site residue. Substrate-binding positions include Gly-89–His-90, His-208, and Asp-232. Catalysis depends on Cys-236, which acts as the Proton donor. A substrate-binding site is contributed by Gly-237–Thr-238.

It belongs to the proline racemase family. Homodimer.

The enzyme catalyses trans-4-hydroxy-L-proline = cis-4-hydroxy-D-proline. Allows intracellular utilization of 4-hydroxyproline, one of the major constituents of host collagen, by converting 4-hydroxy-L-proline to 4-hydroxy-D-proline, which can be further metabolized by intracellular 4-hydroxy-D-proline oxidases. The chain is 4-hydroxyproline epimerase from Burkholderia cenocepacia (strain HI2424).